A 150-amino-acid chain; its full sequence is Anti-sigma F factor (150 aa).

The protein belongs to the anti-sigma-factor family.

It catalyses the reaction L-seryl-[protein] + ATP = O-phospho-L-seryl-[protein] + ADP + H(+). The catalysed reaction is L-threonyl-[protein] + ATP = O-phospho-L-threonyl-[protein] + ADP + H(+). Binds to sigma F and blocks its ability to form an RNA polymerase holoenzyme (E-sigma F). Phosphorylates SpoIIAA on a serine residue. This phosphorylation may enable SpoIIAA to act as an anti-anti-sigma factor that counteracts SpoIIAB and thus releases sigma F from inhibition. The sequence is that of Anti-sigma F factor from Pasteuria penetrans.